The chain runs to 368 residues: N-acetylneuraminate epimerase (368 aa).

The N-terminal stretch at M1–A19 is a signal peptide. Kelch repeat units follow at residues T40–D84, N86–N137, K139–A173, Y174–G219, T222–G265, E287–N336, and L338–Q367. The active-site Proton acceptor is the E228.

The protein belongs to the NanM family. In terms of assembly, homodimer.

Its subcellular location is the periplasm. It catalyses the reaction N-acetyl-alpha-neuraminate = N-acetyl-beta-neuraminate. Its function is as follows. Converts alpha-N-acetylneuranimic acid (Neu5Ac) to the beta-anomer, accelerating the equilibrium between the alpha- and beta-anomers. Probably facilitates sialidase-negative bacteria to compete successfully for limited amounts of extracellular Neu5Ac, which is likely taken up in the beta-anomer. In addition, the rapid removal of sialic acid from solution might be advantageous to the bacterium to damp down host responses. In Escherichia coli O139:H28 (strain E24377A / ETEC), this protein is N-acetylneuraminate epimerase.